We begin with the raw amino-acid sequence, 228 residues long: Tumor necrosis factor receptor superfamily member 18 (228 aa).

A signal peptide spans Met-1–Gly-19. At Gln-20–His-153 the chain is on the extracellular side. 3 TNFR-Cys repeats span residues Gly-28–Ile-61, Cys-62–Val-101, and Ala-102–Ile-142. 5 disulfides stabilise this stretch: Cys-29/Cys-44, Cys-62/Cys-74, Cys-69/Cys-82, Cys-103/Cys-122, and Cys-116/Cys-141. N-linked (GlcNAc...) asparagine glycans are attached at residues Asn-36 and Asn-40. 2 N-linked (GlcNAc...) asparagine glycosylation sites follow: Asn-121 and Asn-134. The helical transmembrane segment at Leu-154–Gly-174 threads the bilayer. At Leu-175–Pro-228 the chain is on the cytoplasmic side.

Binds to TRAF1, TRAF2, and TRAF3, but not TRAF5 and TRAF6. Binds through its C-terminus to SIVA1/SIVA. In terms of tissue distribution, preferentially expressed in activated T lymphocytes.

The protein localises to the cell membrane. It is found in the secreted. Its function is as follows. Receptor for TNFSF18. Seems to be involved in interactions between activated T-lymphocytes and endothelial cells and in the regulation of T-cell receptor-mediated cell death. Mediated NF-kappa-B activation via the TRAF2/NIK pathway. This is Tumor necrosis factor receptor superfamily member 18 (Tnfrsf18) from Mus musculus (Mouse).